Consider the following 120-residue polypeptide: UPF0102 protein TWT_455 (120 aa).

The protein belongs to the UPF0102 family.

This chain is UPF0102 protein TWT_455, found in Tropheryma whipplei (strain Twist) (Whipple's bacillus).